We begin with the raw amino-acid sequence, 362 residues long: tRNA N6-adenosine threonylcarbamoyltransferase (362 aa).

Fe cation is bound by residues His116 and His120. Residues 138–142 (LVSGG), Asp171, Gly184, and Asn284 contribute to the substrate site. Position 312 (Asp312) interacts with Fe cation.

This sequence belongs to the KAE1 / TsaD family. The cofactor is Fe(2+).

It is found in the cytoplasm. It catalyses the reaction L-threonylcarbamoyladenylate + adenosine(37) in tRNA = N(6)-L-threonylcarbamoyladenosine(37) in tRNA + AMP + H(+). Functionally, required for the formation of a threonylcarbamoyl group on adenosine at position 37 (t(6)A37) in tRNAs that read codons beginning with adenine. Is involved in the transfer of the threonylcarbamoyl moiety of threonylcarbamoyl-AMP (TC-AMP) to the N6 group of A37, together with TsaE and TsaB. TsaD likely plays a direct catalytic role in this reaction. The protein is tRNA N6-adenosine threonylcarbamoyltransferase of Chelativorans sp. (strain BNC1).